Reading from the N-terminus, the 610-residue chain is UvrABC system protein C (610 aa).

The GIY-YIG domain maps to 16-94; that stretch reads SQPGVYRMYD…IKLYQPRYNV (79 aa). One can recognise a UVR domain in the interval 204–239; that stretch reads DQVLTQLIARMEKASQDLAFEEAARIRDQIQAVRRV.

The protein belongs to the UvrC family. Interacts with UvrB in an incision complex.

It localises to the cytoplasm. In terms of biological role, the UvrABC repair system catalyzes the recognition and processing of DNA lesions. UvrC both incises the 5' and 3' sides of the lesion. The N-terminal half is responsible for the 3' incision and the C-terminal half is responsible for the 5' incision. The polypeptide is UvrABC system protein C (Salmonella schwarzengrund (strain CVM19633)).